A 188-amino-acid polypeptide reads, in one-letter code: MKISANSIRTGNILVCNNDLWVVSKTPEHTQPGKGGAYVQVEMKNLKTGIKRNDRFSSSDYLEKAELEQKDYQFLYFEGNDLILMDTKHFDQINVPKGILEEKLPFLTENMIVKVEFYNEKPLNIELPPTVILEISETDPVIKGATATASYKPAVLENGIKVKVPQYLAIGEKIVVKTDDITYVERAK.

It belongs to the elongation factor P family.

The protein localises to the cytoplasm. The protein operates within protein biosynthesis; polypeptide chain elongation. In terms of biological role, involved in peptide bond synthesis. Stimulates efficient translation and peptide-bond synthesis on native or reconstituted 70S ribosomes in vitro. Probably functions indirectly by altering the affinity of the ribosome for aminoacyl-tRNA, thus increasing their reactivity as acceptors for peptidyl transferase. The chain is Elongation factor P from Rickettsia akari (strain Hartford).